Here is a 403-residue protein sequence, read N- to C-terminus: Probable tubulin--tyrosine ligase C12B10.04 (403 aa).

Positions 9-386 (KVYVNYRDEY…PFFESSTKRN (378 aa)) constitute a TTL domain.

Belongs to the tubulin--tyrosine ligase family. Mg(2+) is required as a cofactor. K(+) serves as cofactor.

The protein resides in the cytoplasm. The protein localises to the nucleus. The catalysed reaction is C-terminal L-alpha-aminoacyl-L-glutamyl-L-glutamyl-[tubulin] + L-tyrosine + ATP = C-terminal L-alpha-aminoacyl-L-glutamyl-L-glutamyl-L-tyrosyl-[tubulin] + ADP + phosphate + H(+). Functionally, probable tubulin--tyrosine ligase. This is Probable tubulin--tyrosine ligase C12B10.04 from Schizosaccharomyces pombe (strain 972 / ATCC 24843) (Fission yeast).